A 522-amino-acid polypeptide reads, in one-letter code: Lysine--tRNA ligase (522 aa).

The 'HIGH' region motif lies at 44 to 52; sequence PSGLPHIGT. Residues 290-294 carry the 'KMSKS' region motif; sequence KISKS. ATP is bound at residue K293.

Belongs to the class-I aminoacyl-tRNA synthetase family.

The protein resides in the cytoplasm. The catalysed reaction is tRNA(Lys) + L-lysine + ATP = L-lysyl-tRNA(Lys) + AMP + diphosphate. This Rickettsia bellii (strain RML369-C) protein is Lysine--tRNA ligase.